The sequence spans 241 residues: 1-(5-phosphoribosyl)-5-[(5-phosphoribosylamino)methylideneamino] imidazole-4-carboxamide isomerase (241 aa).

Asp8 (proton acceptor) is an active-site residue. The active-site Proton donor is Asp131.

It belongs to the HisA/HisF family.

The protein resides in the cytoplasm. The catalysed reaction is 1-(5-phospho-beta-D-ribosyl)-5-[(5-phospho-beta-D-ribosylamino)methylideneamino]imidazole-4-carboxamide = 5-[(5-phospho-1-deoxy-D-ribulos-1-ylimino)methylamino]-1-(5-phospho-beta-D-ribosyl)imidazole-4-carboxamide. It functions in the pathway amino-acid biosynthesis; L-histidine biosynthesis; L-histidine from 5-phospho-alpha-D-ribose 1-diphosphate: step 4/9. The chain is 1-(5-phosphoribosyl)-5-[(5-phosphoribosylamino)methylideneamino] imidazole-4-carboxamide isomerase from Sorangium cellulosum (strain So ce56) (Polyangium cellulosum (strain So ce56)).